Reading from the N-terminus, the 539-residue chain is GMP synthase [glutamine-hydrolyzing] (539 aa).

The Glutamine amidotransferase type-1 domain maps to 4–202 (KILILDFGSQ…VLQIAGCKPD (199 aa)). Catalysis depends on C81, which acts as the Nucleophile. Residues H176 and E178 contribute to the active site. Residues 203–395 (WVMRDHIEEA…LGLPPEMVYR (193 aa)) enclose the GMPS ATP-PPase domain. 230–236 (SGGVDSS) serves as a coordination point for ATP.

As to quaternary structure, homodimer.

It catalyses the reaction XMP + L-glutamine + ATP + H2O = GMP + L-glutamate + AMP + diphosphate + 2 H(+). Its pathway is purine metabolism; GMP biosynthesis; GMP from XMP (L-Gln route): step 1/1. In terms of biological role, catalyzes the synthesis of GMP from XMP. This Cupriavidus taiwanensis (strain DSM 17343 / BCRC 17206 / CCUG 44338 / CIP 107171 / LMG 19424 / R1) (Ralstonia taiwanensis (strain LMG 19424)) protein is GMP synthase [glutamine-hydrolyzing].